The sequence spans 164 residues: Glutaredoxin-2, mitochondrial (164 aa).

Residues 1-19 (MIWRRAALAGTRLVWSRSG) constitute a mitochondrion transit peptide. Serine 20 bears the Phosphoserine mark. The 101-residue stretch at 57–157 (VNQIQETISD…PLVHQCYLKK (101 aa)) folds into the Glutaredoxin domain. A [2Fe-2S] cluster-binding site is contributed by cysteine 68. Lysine 74 is a glutathione binding site. The residue at position 77 (cysteine 77) is an S-glutathionyl cysteine; alternate. Cysteine 77 and cysteine 80 are oxidised to a cystine. Positions 109 and 121 each coordinate glutathione. Residue cysteine 153 participates in [2Fe-2S] cluster binding.

It belongs to the glutaredoxin family. As to quaternary structure, monomer; active form. Homodimer; inactive form. The homodimer is probably linked by 1 2Fe-2S cluster. As to expression, widely expressed. Expressed in brain, heart, skeletal muscle, colon, thymus, spleen, kidney, liver, small intestine, placenta and lung. Not expressed in peripheral blood leukocytes.

It localises to the mitochondrion. The protein localises to the nucleus. The 2Fe-2S present in the homodimer leads to inactivation of the enzyme. The 2Fe-2S may serve as a redox sensor: the presence of one-electron oxidants or reductants leading to the loss of the 2Fe-2S cluster, subsequent monomerization and activation of the enzyme. Unlike other glutaredoxins, it is not inhibited by oxidation of structural Cys residues. Functionally, glutathione-dependent oxidoreductase that facilitates the maintenance of mitochondrial redox homeostasis upon induction of apoptosis by oxidative stress. Involved in response to hydrogen peroxide and regulation of apoptosis caused by oxidative stress. Acts as a very efficient catalyst of monothiol reactions because of its high affinity for protein glutathione-mixed disulfides. Can receive electrons not only from glutathione (GSH), but also from thioredoxin reductase supporting both monothiol and dithiol reactions. Efficiently catalyzes both glutathionylation and deglutathionylation of mitochondrial complex I, which in turn regulates the superoxide production by the complex. Overexpression decreases the susceptibility to apoptosis and prevents loss of cardiolipin and cytochrome c release. This chain is Glutaredoxin-2, mitochondrial (GLRX2), found in Homo sapiens (Human).